Consider the following 453-residue polypeptide: Phosphoglucosamine mutase (453 aa).

Residue Ser-102 is the Phosphoserine intermediate of the active site. Mg(2+) is bound by residues Ser-102, Asp-244, Asp-246, and Asp-248. Phosphoserine is present on Ser-102.

It belongs to the phosphohexose mutase family. Requires Mg(2+) as cofactor. In terms of processing, activated by phosphorylation.

It carries out the reaction alpha-D-glucosamine 1-phosphate = D-glucosamine 6-phosphate. Its function is as follows. Catalyzes the conversion of glucosamine-6-phosphate to glucosamine-1-phosphate. The sequence is that of Phosphoglucosamine mutase from Pelobacter propionicus (strain DSM 2379 / NBRC 103807 / OttBd1).